We begin with the raw amino-acid sequence, 153 residues long: Histone deacetylase complex subunit SAP18 (153 aa).

The disordered stretch occupies residues 1 to 20 (MAVESRVTQEEIKKEPEKPI). Ala-2 is subject to N-acetylalanine. The span at 7-20 (VTQEEIKKEPEKPI) shows a compositional bias: basic and acidic residues. A Glycyl lysine isopeptide (Lys-Gly) (interchain with G-Cter in SUMO2) cross-link involves residue Lys-13. The segment at 93–153 (FMDLKRPGYR…PPSSGRMRPY (61 aa)) is involved in splicing regulation activity.

This sequence belongs to the SAP18 family. Found in a mRNA splicing-dependent exon junction complex (EJC). Component of the heterotrimeric ASAP (apoptosis- and splicing-associated protein) and PSAP complexes consisting of RNPS1, SAP18 and either ACIN1 or PNN, respectively; the ASAP and PSAP complexes probably are formed mutually exclusive. For the ASAP complex, the association of SAP18 seems to require a preformed RNPS1:ACIN1 complex. Forms a complex with SIN3A and HDAC1. Interacts with SUFU. As to expression, expressed in all tissues tested; highest levels in the brain, kidney and muscle; lowest levels in lung spleen, liver, intestine and testis, and moderate levels in salivary gland and heart.

It localises to the nucleus. Its subcellular location is the cytoplasm. It is found in the nucleus speckle. In terms of biological role, component of the SIN3-repressing complex. Enhances the ability of SIN3-HDAC1-mediated transcriptional repression. When tethered to the promoter, it can direct the formation of a repressive complex to core histone proteins. Auxiliary component of the splicing-dependent multiprotein exon junction complex (EJC) deposited at splice junction on mRNAs. The EJC is a dynamic structure consisting of core proteins and several peripheral nuclear and cytoplasmic associated factors that join the complex only transiently either during EJC assembly or during subsequent mRNA metabolism. Component of the ASAP and PSAP complexes which bind RNA in a sequence-independent manner and are proposed to be recruited to the EJC prior to or during the splicing process and to regulate specific excision of introns in specific transcription subsets. The ASAP complex can inhibit mRNA processing during in vitro splicing reactions. The ASAP complex promotes apoptosis and is disassembled after induction of apoptosis. Involved in the splicing modulation of BCL2L1/Bcl-X (and probably other apoptotic genes); specifically inhibits the formation of proapoptotic isoforms such as Bcl-X(S); the activity is different from the established EJC assembly and function. This Mus musculus (Mouse) protein is Histone deacetylase complex subunit SAP18 (Sap18).